We begin with the raw amino-acid sequence, 149 residues long: Protein NrdI (149 aa).

It belongs to the NrdI family.

Functionally, probably involved in ribonucleotide reductase function. In Malacoplasma penetrans (strain HF-2) (Mycoplasma penetrans), this protein is Protein NrdI.